The chain runs to 433 residues: 3-phosphoshikimate 1-carboxyvinyltransferase (433 aa).

3-phosphoshikimate-binding residues include lysine 21, serine 22, and arginine 26. Position 21 (lysine 21) interacts with phosphoenolpyruvate. 2 residues coordinate phosphoenolpyruvate: glycine 96 and arginine 124. Residues serine 167, serine 168, glutamine 169, serine 195, aspartate 310, and lysine 337 each coordinate 3-phosphoshikimate. A phosphoenolpyruvate-binding site is contributed by glutamine 169. Residue aspartate 310 is the Proton acceptor of the active site. Phosphoenolpyruvate-binding residues include arginine 341, arginine 384, and lysine 410.

It belongs to the EPSP synthase family. As to quaternary structure, monomer.

The protein localises to the cytoplasm. The catalysed reaction is 3-phosphoshikimate + phosphoenolpyruvate = 5-O-(1-carboxyvinyl)-3-phosphoshikimate + phosphate. It participates in metabolic intermediate biosynthesis; chorismate biosynthesis; chorismate from D-erythrose 4-phosphate and phosphoenolpyruvate: step 6/7. In terms of biological role, catalyzes the transfer of the enolpyruvyl moiety of phosphoenolpyruvate (PEP) to the 5-hydroxyl of shikimate-3-phosphate (S3P) to produce enolpyruvyl shikimate-3-phosphate and inorganic phosphate. This Clostridium botulinum (strain Eklund 17B / Type B) protein is 3-phosphoshikimate 1-carboxyvinyltransferase.